The sequence spans 89 residues: Large ribosomal subunit protein bL27 (89 aa).

The segment at 1-23 is disordered; that stretch reads MAHKKAGGSSRNGRDSHSKRLGV.

Belongs to the bacterial ribosomal protein bL27 family.

This chain is Large ribosomal subunit protein bL27, found in Mesorhizobium japonicum (strain LMG 29417 / CECT 9101 / MAFF 303099) (Mesorhizobium loti (strain MAFF 303099)).